We begin with the raw amino-acid sequence, 275 residues long: 4-hydroxy-tetrahydrodipicolinate reductase (275 aa).

12–17 (GAAGRM) provides a ligand contact to NAD(+). An NADP(+)-binding site is contributed by R39. Residues 102–104 (GTT) and 126–129 (SGNM) contribute to the NAD(+) site. The active-site Proton donor/acceptor is the H160. H161 lines the (S)-2,3,4,5-tetrahydrodipicolinate pocket. K164 functions as the Proton donor in the catalytic mechanism. A (S)-2,3,4,5-tetrahydrodipicolinate-binding site is contributed by 170–171 (GT).

This sequence belongs to the DapB family.

The protein resides in the cytoplasm. The enzyme catalyses (S)-2,3,4,5-tetrahydrodipicolinate + NAD(+) + H2O = (2S,4S)-4-hydroxy-2,3,4,5-tetrahydrodipicolinate + NADH + H(+). It catalyses the reaction (S)-2,3,4,5-tetrahydrodipicolinate + NADP(+) + H2O = (2S,4S)-4-hydroxy-2,3,4,5-tetrahydrodipicolinate + NADPH + H(+). It participates in amino-acid biosynthesis; L-lysine biosynthesis via DAP pathway; (S)-tetrahydrodipicolinate from L-aspartate: step 4/4. In terms of biological role, catalyzes the conversion of 4-hydroxy-tetrahydrodipicolinate (HTPA) to tetrahydrodipicolinate. In Agrobacterium fabrum (strain C58 / ATCC 33970) (Agrobacterium tumefaciens (strain C58)), this protein is 4-hydroxy-tetrahydrodipicolinate reductase.